Here is a 176-residue protein sequence, read N- to C-terminus: RNA polymerase sigma factor SigO (176 aa).

Positions 30 to 43 (DARSLDELFKQFYK) match the Polymerase core binding motif. The segment at residues 139 to 158 (MQEIADSLGESRQNISNIHK) is a DNA-binding region (H-T-H motif).

Belongs to the sigma-70 factor family. Interacts with RNA polymerase.

In terms of biological role, sigma factors are initiation factors that promote the attachment of RNA polymerase to specific initiation sites and are then released. Together with its coactivator RsoA, positively regulates the expression of at least three operons, including oxdC-yvrL, sigO-rsoA and yvrJ. Required for the acid stress-dependent induction of the oxalate decarboxylase oxdC. The protein is RNA polymerase sigma factor SigO (sigO) of Bacillus subtilis (strain 168).